The sequence spans 928 residues: G-protein coupled receptor family C group 6 member A (928 aa).

Positions 1–20 (MALLITVVTCFMIILDTSQS) are cleaved as a signal peptide. Topologically, residues 21-594 (CHTPDDFVAI…EYLDWDDSLA (574 aa)) are extracellular. N-linked (GlcNAc...) asparagine glycans are attached at residues asparagine 332, asparagine 555, and asparagine 567. The chain crosses the membrane as a helical span at residues 595-615 (LLLIALSLLGIAFVLAIGIIF). Residues 616–630 (TRNLKTPVVKSSGGL) lie on the Cytoplasmic side of the membrane. Residues 631–651 (VVCYVMLICHALNFASTGFFI) traverse the membrane as a helical segment. Residues 652–669 (GEPQDFACKTRQTLFGVS) are Extracellular-facing. The chain crosses the membrane as a helical span at residues 670–690 (FTLCVSCILTKSLKILLAFSF). Topologically, residues 691 to 706 (DPKLTMFLKCLYRPVP) are cytoplasmic. Residues 707 to 727 (IVLTCTGIQVVICTLWLVLAA) form a helical membrane-spanning segment. Residues 728–750 (PSVEENISLPRVIILECEEGSAL) lie on the Extracellular side of the membrane. A helical membrane pass occupies residues 751-771 (AFGTMLGYITVLAFICFVFAF). At 772–784 (KGRKLPENYNEAK) the chain is on the cytoplasmic side. Residues 785 to 805 (FLTFGMLIYFIAWITFIPVYT) traverse the membrane as a helical segment. At 806–812 (TTFGKYL) the chain is on the extracellular side. Residues 813–833 (PAVEIIVILISNYGILCCIFF) form a helical membrane-spanning segment. Residues 834–928 (PKCYIILCKQ…TLRQKRSSSI (95 aa)) lie on the Cytoplasmic side of the membrane.

The protein belongs to the G-protein coupled receptor 3 family. In terms of assembly, homodimer; disulfide-linked. Post-translationally, N-glycosylated. Expressed at high level in liver, lung, spleen and heart. Expressed at lower level in kidney, skeletal muscle and brain. Expressed in 7 dpc, 11 dpc, 15 dpc and 17 dpc embryos.

It localises to the cell membrane. Functionally, receptor activated by multiple ligands, including osteocalcin (BGLAP), basic amino acids, and various cations. Activated by amino acids with a preference for basic amino acids such as L-Lys, L-Arg and L-ornithine but also by small and polar amino acids. The L-alpha amino acids respond is augmented by divalent cations Ca(2+) and Mg(2+). Seems to act through a G(q)/G(11) and G(i)-coupled pathway. Regulates testosterone production by acting as a ligand for uncarboxylated osteocalcin hormone: osteocalcin-binding at the surface of Leydig cells initiates a signaling response that promotes the expression of enzymes required for testosterone synthesis in a CREB-dependent manner. Mediates the non-genomic effects of androgens in multiple tissue. May coordinate nutritional and hormonal anabolic signals through the sensing of extracellular amino acids, osteocalcin, divalent ions and its responsiveness to anabolic steroids. This is G-protein coupled receptor family C group 6 member A (Gprc6a) from Mus musculus (Mouse).